The following is a 358-amino-acid chain: Heme A synthase (358 aa).

8 helical membrane passes run 22–42 (IQVW…VGGA), 107–127 (VLGR…WAIK), 133–153 (VLLQ…VGWW), 172–192 (LAFH…LSQG), 208–228 (FAGW…LVAG), 269–289 (FVHR…AFYV), 302–322 (AFFI…TLLQ), and 324–344 (VPIS…CFSV). Residue His271 coordinates heme. His332 is a heme binding site.

Belongs to the COX15/CtaA family. Type 2 subfamily. In terms of assembly, interacts with CtaB. Heme b serves as cofactor.

Its subcellular location is the cell membrane. It carries out the reaction Fe(II)-heme o + 2 A + H2O = Fe(II)-heme a + 2 AH2. Its pathway is porphyrin-containing compound metabolism; heme A biosynthesis; heme A from heme O: step 1/1. Catalyzes the conversion of heme O to heme A by two successive hydroxylations of the methyl group at C8. The first hydroxylation forms heme I, the second hydroxylation results in an unstable dihydroxymethyl group, which spontaneously dehydrates, resulting in the formyl group of heme A. This is Heme A synthase from Bartonella henselae (strain ATCC 49882 / DSM 28221 / CCUG 30454 / Houston 1) (Rochalimaea henselae).